The chain runs to 287 residues: Flagellin (287 aa).

Belongs to the bacterial flagellin family.

Its subcellular location is the secreted. The protein localises to the bacterial flagellum. Flagellin is the subunit protein which polymerizes to form the filaments of bacterial flagella. This is Flagellin (flaA) from Listeria monocytogenes serovar 1/2a (strain ATCC BAA-679 / EGD-e).